We begin with the raw amino-acid sequence, 371 residues long: UDP-N-acetylglucosamine--N-acetylmuramyl-(pentapeptide) pyrophosphoryl-undecaprenol N-acetylglucosamine transferase (371 aa).

Residues 10–12 (TGG), Asn122, Arg166, Ser196, and Gln301 contribute to the UDP-N-acetyl-alpha-D-glucosamine site.

Belongs to the glycosyltransferase 28 family. MurG subfamily.

It localises to the cell inner membrane. The catalysed reaction is di-trans,octa-cis-undecaprenyl diphospho-N-acetyl-alpha-D-muramoyl-L-alanyl-D-glutamyl-meso-2,6-diaminopimeloyl-D-alanyl-D-alanine + UDP-N-acetyl-alpha-D-glucosamine = di-trans,octa-cis-undecaprenyl diphospho-[N-acetyl-alpha-D-glucosaminyl-(1-&gt;4)]-N-acetyl-alpha-D-muramoyl-L-alanyl-D-glutamyl-meso-2,6-diaminopimeloyl-D-alanyl-D-alanine + UDP + H(+). It participates in cell wall biogenesis; peptidoglycan biosynthesis. Its function is as follows. Cell wall formation. Catalyzes the transfer of a GlcNAc subunit on undecaprenyl-pyrophosphoryl-MurNAc-pentapeptide (lipid intermediate I) to form undecaprenyl-pyrophosphoryl-MurNAc-(pentapeptide)GlcNAc (lipid intermediate II). The polypeptide is UDP-N-acetylglucosamine--N-acetylmuramyl-(pentapeptide) pyrophosphoryl-undecaprenol N-acetylglucosamine transferase (Halothermothrix orenii (strain H 168 / OCM 544 / DSM 9562)).